The primary structure comprises 236 residues: Carbonyl reductase family member 4 (236 aa).

Residues 11 to 14 (SRGI), 34 to 35 (RN), Asp55, and 82 to 84 (SAG) contribute to the NADP(+) site. Ser134 is a substrate binding site. NADP(+) contacts are provided by residues Tyr147, Lys151, and 180–182 (IRT). Residue Tyr147 is the Proton acceptor of the active site.

The protein belongs to the short-chain dehydrogenases/reductases (SDR) family. As to quaternary structure, homotetramer (in vitro). Heterotetramer with HSD17B8; contains two molecules each of HSD17B8 and CBR4.

It is found in the mitochondrion matrix. It participates in lipid metabolism; fatty acid biosynthesis. In terms of biological role, the heterotetramer with HSD17B8 has NADH-dependent 3-ketoacyl-acyl carrier protein reductase activity, and thereby plays a role in mitochondrial fatty acid biosynthesis. Within the heterotetramer, HSD17B8 binds NADH; CBR4 binds NADPD. The homotetramer has NADPH-dependent quinone reductase activity. Both homotetramer and the heterotetramer have broad in vitro substrate specificity and can reduce 9,10-phenanthrenequinone, 1,4-benzoquinone and various other o-quinones and p-quinones. In Xenopus laevis (African clawed frog), this protein is Carbonyl reductase family member 4 (cbr4).